The sequence spans 487 residues: N-succinylglutamate 5-semialdehyde dehydrogenase (487 aa).

Residue G221–G226 participates in NAD(+) binding. Residues E244 and C278 contribute to the active site.

This sequence belongs to the aldehyde dehydrogenase family. AstD subfamily.

It catalyses the reaction N-succinyl-L-glutamate 5-semialdehyde + NAD(+) + H2O = N-succinyl-L-glutamate + NADH + 2 H(+). It functions in the pathway amino-acid degradation; L-arginine degradation via AST pathway; L-glutamate and succinate from L-arginine: step 4/5. Its function is as follows. Catalyzes the NAD-dependent reduction of succinylglutamate semialdehyde into succinylglutamate. In Burkholderia ambifaria (strain MC40-6), this protein is N-succinylglutamate 5-semialdehyde dehydrogenase.